Reading from the N-terminus, the 443-residue chain is ATP-dependent protease ATPase subunit HslU (443 aa).

ATP contacts are provided by residues Ile-18, 60 to 65, Asp-256, Glu-321, and Arg-393; that span reads GVGKTE.

It belongs to the ClpX chaperone family. HslU subfamily. In terms of assembly, a double ring-shaped homohexamer of HslV is capped on each side by a ring-shaped HslU homohexamer. The assembly of the HslU/HslV complex is dependent on binding of ATP.

It is found in the cytoplasm. Its function is as follows. ATPase subunit of a proteasome-like degradation complex; this subunit has chaperone activity. The binding of ATP and its subsequent hydrolysis by HslU are essential for unfolding of protein substrates subsequently hydrolyzed by HslV. HslU recognizes the N-terminal part of its protein substrates and unfolds these before they are guided to HslV for hydrolysis. The protein is ATP-dependent protease ATPase subunit HslU of Citrobacter koseri (strain ATCC BAA-895 / CDC 4225-83 / SGSC4696).